The following is a 707-amino-acid chain: tRNA 5-methylaminomethyl-2-thiouridine biosynthesis bifunctional protein MnmC (707 aa).

Residues 1-264 (MTKKLEHEYI…KREMLFGTFE (264 aa)) form a tRNA (mnm(5)s(2)U34)-methyltransferase region. Residues 312-707 (IGGGLAGAHA…LFRDLTRNRI (396 aa)) are FAD-dependent cmnm(5)s(2)U34 oxidoreductase.

In the N-terminal section; belongs to the methyltransferase superfamily. tRNA (mnm(5)s(2)U34)-methyltransferase family. It in the C-terminal section; belongs to the DAO family. It depends on FAD as a cofactor.

Its subcellular location is the cytoplasm. It catalyses the reaction 5-aminomethyl-2-thiouridine(34) in tRNA + S-adenosyl-L-methionine = 5-methylaminomethyl-2-thiouridine(34) in tRNA + S-adenosyl-L-homocysteine + H(+). In terms of biological role, catalyzes the last two steps in the biosynthesis of 5-methylaminomethyl-2-thiouridine (mnm(5)s(2)U) at the wobble position (U34) in tRNA. Catalyzes the FAD-dependent demodification of cmnm(5)s(2)U34 to nm(5)s(2)U34, followed by the transfer of a methyl group from S-adenosyl-L-methionine to nm(5)s(2)U34, to form mnm(5)s(2)U34. This chain is tRNA 5-methylaminomethyl-2-thiouridine biosynthesis bifunctional protein MnmC, found in Saccharophagus degradans (strain 2-40 / ATCC 43961 / DSM 17024).